The sequence spans 186 residues: EF-hand protein 5 (186 aa).

The interval 1–23 (MSRSKEVSPNLSQQKRGDVRSAG) is disordered. EF-hand domains lie at 41-76 (SAEL…GLHT), 77-112 (SEEE…GIDE), 113-148 (ASIA…SGEH), and 149-186 (SSAE…LNKM). Ca(2+) is bound by residues Glu-98, Asp-126, and Thr-130.

The chain is EF-hand protein 5 from Leishmania tarentolae (Sauroleishmania tarentolae).